The chain runs to 401 residues: Nicotinate phosphoribosyltransferase (401 aa).

H224 carries the phosphohistidine; by autocatalysis modification.

This sequence belongs to the NAPRTase family. Transiently phosphorylated on a His residue during the reaction cycle. Phosphorylation strongly increases the affinity for substrates and increases the rate of nicotinate D-ribonucleotide production. Dephosphorylation regenerates the low-affinity form of the enzyme, leading to product release.

It carries out the reaction nicotinate + 5-phospho-alpha-D-ribose 1-diphosphate + ATP + H2O = nicotinate beta-D-ribonucleotide + ADP + phosphate + diphosphate. The protein operates within cofactor biosynthesis; NAD(+) biosynthesis; nicotinate D-ribonucleotide from nicotinate: step 1/1. Its function is as follows. Catalyzes the synthesis of beta-nicotinate D-ribonucleotide from nicotinate and 5-phospho-D-ribose 1-phosphate at the expense of ATP. This chain is Nicotinate phosphoribosyltransferase, found in Pseudomonas putida (strain ATCC 700007 / DSM 6899 / JCM 31910 / BCRC 17059 / LMG 24140 / F1).